We begin with the raw amino-acid sequence, 207 residues long: Adenylyl-sulfate kinase (207 aa).

39–46 contributes to the ATP binding site; sequence GLSGAGKS. Serine 113 (phosphoserine intermediate) is an active-site residue.

Belongs to the APS kinase family.

The enzyme catalyses adenosine 5'-phosphosulfate + ATP = 3'-phosphoadenylyl sulfate + ADP + H(+). It participates in sulfur metabolism; hydrogen sulfide biosynthesis; sulfite from sulfate: step 2/3. Its function is as follows. Catalyzes the synthesis of activated sulfate. The protein is Adenylyl-sulfate kinase of Vibrio vulnificus (strain CMCP6).